Here is a 301-residue protein sequence, read N- to C-terminus: E3 ubiquitin-protein ligase RNF144B (301 aa).

The tract at residues 26-242 is TRIAD supradomain; sequence PLVTCKLCLC…YDKGPCRNKL (217 aa). C30, C33, C53, C56, C121, C126, C145, C148, C153, C156, H161, C166, C191, and C194 together coordinate Zn(2+). The RING-type 1 zinc-finger motif lies at 30-80; that stretch reads CKLCLCEQSLDKMTMLQECQCIFCTPCLKQYMVLSIREGCGSPITCPDMVC. The IBR-type zinc-finger motif lies at 101–166; the sequence is QLYQRLKFER…KDAWHEESSC (66 aa). The RING-type 2; atypical zinc-finger motif lies at 191–220; sequence CPVCRIYIERNEGCAQMMCKNCKHTFCWYC. C204 is a catalytic residue. Zn(2+)-binding residues include C209, C212, C217, C220, H232, and C238. The chain crosses the membrane as a helical span at residues 256-276; sequence VVGILVGLGVIALVTSPLLLL.

Belongs to the RBR family. RNF144 subfamily. In terms of assembly, interacts with UBE2L3, UBE2L6 and LCMT2, as well as with BAX. Interacts with TBK1; this interaction inhibits TBK1 phosphorylation and 'Lys-63'-linked polyubiquitination. Auto-ubiquitinated.

Its subcellular location is the mitochondrion membrane. It localises to the cytoplasm. The enzyme catalyses [E2 ubiquitin-conjugating enzyme]-S-ubiquitinyl-L-cysteine + [acceptor protein]-L-lysine = [E2 ubiquitin-conjugating enzyme]-L-cysteine + [acceptor protein]-N(6)-ubiquitinyl-L-lysine.. Its pathway is protein modification; protein ubiquitination. Its function is as follows. E3 ubiquitin-protein ligase which accepts ubiquitin from E2 ubiquitin-conjugating enzymes UBE2L3 and UBE2L6 in the form of a thioester and then directly transfers the ubiquitin to targeted substrates such as LCMT2, thereby promoting their degradation. Induces apoptosis via a p53/TP53-dependent but caspase-independent mechanism. Plays a crucial role in maintaining the genomic stability by controlling the degradation of multiple proteins involved in mitotic progression and DNA damage. Regulates epithelial homeostasis by mediating degradation of CDKN1A and isoform 2 of TP63. Plays a regulatory role in innate immunity by negatively regulating IRF3 activation and IFN-beta production. Mechanistically, inhibits TBK1 phosphorylation and 'Lys-63'-linked polyubiquitination independently of its E3 ligase activity. Alternatively, promotes 'Lys-27' and 'Lys-33'-linked ubiquitination of IFIH1/MDA5, promoting selective autophagic degradation of IFIH1/MDA5 to inhibit antiviral response. The chain is E3 ubiquitin-protein ligase RNF144B (Rnf144b) from Mus musculus (Mouse).